Consider the following 63-residue polypeptide: Glutamine synthetase translation inhibitor (63 aa).

Its function is as follows. Inhibits the synthesis of glutamine synthetase II. The polypeptide is Glutamine synthetase translation inhibitor (gstI) (Rhizobium leguminosarum).